We begin with the raw amino-acid sequence, 139 residues long: D-ribose pyranase (139 aa).

The Proton donor role is filled by H20. Residues D28, H106, and Y128–N130 each bind substrate.

Belongs to the RbsD / FucU family. RbsD subfamily. Homodecamer.

It is found in the cytoplasm. The enzyme catalyses beta-D-ribopyranose = beta-D-ribofuranose. The protein operates within carbohydrate metabolism; D-ribose degradation; D-ribose 5-phosphate from beta-D-ribopyranose: step 1/2. Functionally, catalyzes the interconversion of beta-pyran and beta-furan forms of D-ribose. The chain is D-ribose pyranase from Serratia proteamaculans (strain 568).